The sequence spans 348 residues: Rhodopsin (348 aa).

N-acetylmethionine is present on Met1. The Extracellular segment spans residues Met1–Gln36. N-linked (GlcNAc...) asparagine glycans are attached at residues Asn2 and Asn15. The chain crosses the membrane as a helical span at residues Phe37 to Val61. Topologically, residues Thr62–Asn73 are cytoplasmic. A helical membrane pass occupies residues Tyr74–Tyr96. At Thr97–Cys110 the chain is on the extracellular side. Cys110 and Cys187 form a disulfide bridge. A helical transmembrane segment spans residues Asn111 to Ile133. The 'Ionic lock' involved in activated form stabilization signature appears at Glu134–Tyr136. Over Glu134–His152 the chain is Cytoplasmic. Residues Ala153–Val173 traverse the membrane as a helical segment. Topologically, residues Gly174–Ser202 are extracellular. Position 201 (Glu201) interacts with Zn(2+). Residues Phe203–Gly224 form a helical membrane-spanning segment. The Cytoplasmic portion of the chain corresponds to Gln225–Arg252. A helical membrane pass occupies residues Met253 to Tyr274. Topologically, residues Ile275–Ile286 are extracellular. Gln279 is a Zn(2+) binding site. Residues Phe287 to Met308 traverse the membrane as a helical segment. Lys296 carries the post-translational modification N6-(retinylidene)lysine. At Met309–Ala348 the chain is on the cytoplasmic side. 2 S-palmitoyl cysteine lipidation sites follow: Cys322 and Cys323. Positions Asp330–Ala348 are interaction with SAG. Ser334 carries the phosphoserine modification. Phosphothreonine is present on residues Thr335 and Thr336. Ser338 is subject to Phosphoserine. A phosphothreonine mark is found at Thr340 and Thr342. Residue Ser343 is modified to Phosphoserine.

It belongs to the G-protein coupled receptor 1 family. Opsin subfamily. In terms of assembly, homodimer. May form a complex composed of RHO, GRK1 and RCVRN in a Ca(2+)-dependent manner; RCVRN prevents the interaction between GRK1 and RHO. Interacts with GRK1. Interacts (phosphorylated form) with SAG. Interacts with GNAT1. Interacts with GNAT3. SAG and G-proteins compete for a common binding site. Interacts with PRCD; the interaction promotes PRCD stability. Forms a complex with ASAP1 and ARF4. Forms a complex with ASAP1, RAB11A, Rabin8/RAB3IP, ARF4 and RAB11FIP3; the complex regulates Golgi-to-cilia rhodopsin/RHO transport in photoreceptors. In terms of processing, phosphorylated on some or all of the serine and threonine residues present in the C-terminal region. Contains one covalently linked retinal chromophore. Upon light absorption, the covalently bound 11-cis-retinal is converted to all-trans-retinal. After hydrolysis of the Schiff base and release of the covalently bound all-trans-retinal, active rhodopsin is regenerated by binding of a fresh molecule of 11-cis-retinal.

Its subcellular location is the membrane. The protein localises to the cell projection. The protein resides in the cilium. It is found in the photoreceptor outer segment. Photoreceptor required for image-forming vision at low light intensity. Required for photoreceptor cell viability after birth. Light-induced isomerization of 11-cis to all-trans retinal triggers a conformational change that activates signaling via G-proteins. Subsequent receptor phosphorylation mediates displacement of the bound G-protein alpha subunit by the arrestin SAG and terminates signaling. This Globicephala melas (Long-finned pilot whale) protein is Rhodopsin (RHO).